A 263-amino-acid polypeptide reads, in one-letter code: Probable HTH-type transcriptional regulator ArcR (263 aa).

The region spanning 14–74 is the HTH iclR-type domain; it reads ITSVLNAVEI…DGDGTYQLGD (61 aa). A DNA-binding region (H-T-H motif) is located at residues 35-54; the sequence is LQELTTELDLTKATIHTYMA. The 174-residue stretch at 89-262 folds into the IclR-ED domain; sequence LYRLGREEID…ANIIEVRLET (174 aa).

In terms of biological role, probably regulates transcription of the arcABC operon. This chain is Probable HTH-type transcriptional regulator ArcR (arcR), found in Halobacterium salinarum (strain ATCC 29341 / DSM 671 / R1).